A 328-amino-acid chain; its full sequence is DNA-directed RNA polymerase subunit alpha (328 aa).

The alpha N-terminal domain (alpha-NTD) stretch occupies residues 1 to 232 (MSTQGFLKPR…DQISVFAALE (232 aa)). The interval 248-328 (IDPVLLRPVD…NWPPLGLERP (81 aa)) is alpha C-terminal domain (alpha-CTD).

It belongs to the RNA polymerase alpha chain family. As to quaternary structure, homodimer. The RNAP catalytic core consists of 2 alpha, 1 beta, 1 beta' and 1 omega subunit. When a sigma factor is associated with the core the holoenzyme is formed, which can initiate transcription.

It catalyses the reaction RNA(n) + a ribonucleoside 5'-triphosphate = RNA(n+1) + diphosphate. Its function is as follows. DNA-dependent RNA polymerase catalyzes the transcription of DNA into RNA using the four ribonucleoside triphosphates as substrates. The chain is DNA-directed RNA polymerase subunit alpha from Bordetella avium (strain 197N).